Reading from the N-terminus, the 440-residue chain is Ribulose bisphosphate carboxylase large chain (440 aa).

An N6,N6,N6-trimethyllysine modification is found at K4. Residues N113 and T163 each contribute to the substrate site. K165 acts as the Proton acceptor in catalysis. Substrate is bound at residue K167. The Mg(2+) site is built by K191, D193, and E194. An N6-carboxylysine modification is found at K191. H284 functions as the Proton acceptor in the catalytic mechanism. Residues R285, H317, and S369 each contribute to the substrate site.

It belongs to the RuBisCO large chain family. Type I subfamily. In terms of assembly, heterohexadecamer of 8 large chains and 8 small chains; disulfide-linked. The disulfide link is formed within the large subunit homodimers. Mg(2+) is required as a cofactor. Post-translationally, the disulfide bond which can form in the large chain dimeric partners within the hexadecamer appears to be associated with oxidative stress and protein turnover.

The protein localises to the plastid. It is found in the chloroplast. The catalysed reaction is 2 (2R)-3-phosphoglycerate + 2 H(+) = D-ribulose 1,5-bisphosphate + CO2 + H2O. The enzyme catalyses D-ribulose 1,5-bisphosphate + O2 = 2-phosphoglycolate + (2R)-3-phosphoglycerate + 2 H(+). Its function is as follows. RuBisCO catalyzes two reactions: the carboxylation of D-ribulose 1,5-bisphosphate, the primary event in carbon dioxide fixation, as well as the oxidative fragmentation of the pentose substrate in the photorespiration process. Both reactions occur simultaneously and in competition at the same active site. This is Ribulose bisphosphate carboxylase large chain from Onoclea sensibilis (Sensitive fern).